Here is a 301-residue protein sequence, read N- to C-terminus: Acetylglutamate kinase (301 aa).

Residues Gly-68–Gly-69, Arg-90, and Asn-195 each bind substrate.

The protein belongs to the acetylglutamate kinase family. ArgB subfamily.

It localises to the cytoplasm. The catalysed reaction is N-acetyl-L-glutamate + ATP = N-acetyl-L-glutamyl 5-phosphate + ADP. It participates in amino-acid biosynthesis; L-arginine biosynthesis; N(2)-acetyl-L-ornithine from L-glutamate: step 2/4. Functionally, catalyzes the ATP-dependent phosphorylation of N-acetyl-L-glutamate. The chain is Acetylglutamate kinase from Pseudomonas savastanoi pv. phaseolicola (strain 1448A / Race 6) (Pseudomonas syringae pv. phaseolicola (strain 1448A / Race 6)).